Here is a 228-residue protein sequence, read N- to C-terminus: Ribonuclease 3 (228 aa).

The 130-residue stretch at 3 to 132 folds into the RNase III domain; that stretch reads IRPLEEHLGI…FLGALYLDQG (130 aa). Residue glutamate 45 coordinates Mg(2+). Residue aspartate 49 is part of the active site. Residues aspartate 118 and glutamate 121 each coordinate Mg(2+). Residue glutamate 121 is part of the active site. Residues 158–227 form the DRBM domain; that stretch reads DYKSQLQEFV…AKNALDSINN (70 aa). The segment at 205–228 is disordered; that stretch reads GTGRTKKEAEQRAAKNALDSINNS.

Belongs to the ribonuclease III family. Homodimer. It depends on Mg(2+) as a cofactor.

The protein resides in the cytoplasm. It catalyses the reaction Endonucleolytic cleavage to 5'-phosphomonoester.. Its function is as follows. Digests double-stranded RNA. Involved in the processing of primary rRNA transcript to yield the immediate precursors to the large and small rRNAs (23S and 16S). Processes some mRNAs, and tRNAs when they are encoded in the rRNA operon. Processes pre-crRNA and tracrRNA of type II CRISPR loci if present in the organism. This chain is Ribonuclease 3, found in Oceanobacillus iheyensis (strain DSM 14371 / CIP 107618 / JCM 11309 / KCTC 3954 / HTE831).